The primary structure comprises 930 residues: Isoleucine--tRNA ligase (930 aa).

The short motif at 57–67 (PYANGHIHLGT) is the 'HIGH' region element. L-isoleucyl-5'-AMP is bound at residue glutamate 559. The short motif at 600–604 (KMSKS) is the 'KMSKS' region element. Position 603 (lysine 603) interacts with ATP. 4 residues coordinate Zn(2+): cysteine 899, cysteine 902, cysteine 918, and cysteine 921.

Belongs to the class-I aminoacyl-tRNA synthetase family. IleS type 1 subfamily. As to quaternary structure, monomer. Zn(2+) serves as cofactor.

The protein resides in the cytoplasm. The catalysed reaction is tRNA(Ile) + L-isoleucine + ATP = L-isoleucyl-tRNA(Ile) + AMP + diphosphate. Its function is as follows. Catalyzes the attachment of isoleucine to tRNA(Ile). As IleRS can inadvertently accommodate and process structurally similar amino acids such as valine, to avoid such errors it has two additional distinct tRNA(Ile)-dependent editing activities. One activity is designated as 'pretransfer' editing and involves the hydrolysis of activated Val-AMP. The other activity is designated 'posttransfer' editing and involves deacylation of mischarged Val-tRNA(Ile). The sequence is that of Isoleucine--tRNA ligase from Desulforudis audaxviator (strain MP104C).